Consider the following 768-residue polypeptide: MKLLWQAKMSSIQDWGEEVEEGAVYHVTLKRVQIQQAANKGARWLGVEGDQLPPGHTVSQYETCKIRTIKAGTLEKLVENLLTAFGDNDFTYISIFLSTYRGFASTKEVLELLLDRYGNLTGPNCEDDGSQSSPESKAVIRNAIASILRAWLDQCAEDFREPPHFPCLQKLLEYLKQMMPGSDPERRAQNLLEQFQKQDVDSDNGLLNTSSFSLEEEEELESGGSAEFTNFSEDLVAEQLTYMDAQLFKKVVPHHCLGCIWSQRDKKENKHLAPTIRATISQFNTLTKCVVSTVLGSKELKTQQRARVIEKWINIAHECRILKNFSSLRAIVSALQSNSIYRLKKAWAAVPKDRMLMFEELSDIFSDHNNHLTSRELLMKEGTSKFANLDSSVKENQKRTQRRLQLQKDMGVMQGTVPYLGTFLTDLTMLDTALQDYIEGGLINFEKRRREFEVIAQIKLLQSACNSYCMGPDQKFIQWFQRQQLLSEEESYALSCEIEAAADANTTSPKPRKSMVKRLSLLFLGSDIIPGSTPTKEQPKSAASGSSGESMDSVSVSSCESNHSEAEEGPVTPMDTPDEPQKKLSESSSSCSSIHSMDTNSSGMSSLINPLSSPPTCNNNPKIHKRSVSVTSITSTVLPPVYNQQNEDTCIIRISVEDNNGNMYKSIMLTSQDKTPAVIQRAMSKHNLESDPAEEYELVQVISEDKELVIPDSANVFYAMNSQVNFDFILRKKNSVEEQVKLRSRTSLTLPRTAKRGCWSNRHSKITL.

The region spanning 65–196 is the N-terminal Ras-GEF domain; sequence KIRTIKAGTL…RAQNLLEQFQ (132 aa). One can recognise a Ras-GEF domain in the interval 232–501; it reads SEDLVAEQLT…YALSCEIEAA (270 aa). The residue at position 520 (S520) is a Phosphoserine. A disordered region spans residues 530–623; sequence PGSTPTKEQP…PPTCNNNPKI (94 aa). 2 stretches are compositionally biased toward low complexity: residues 541–561 and 586–596; these read SAASGSSGESMDSVSVSSCES and ESSSSCSSIHS. A compositionally biased stretch (polar residues) spans 597–621; sequence MDTNSSGMSSLINPLSSPPTCNNNP. One can recognise a Ras-associating domain in the interval 648 to 735; that stretch reads DTCIIRISVE…FDFILRKKNS (88 aa).

In terms of assembly, interacts with Ras.

Probable guanine nucleotide exchange factor. The chain is Ral guanine nucleotide dissociation stimulator-like 1 (Rgl1) from Mus musculus (Mouse).